Here is a 417-residue protein sequence, read N- to C-terminus: Lipoyl synthase, mitochondrial (417 aa).

The transit peptide at 1-30 (MATSIPRSRCFLTSSTLKVVPRSRTPLRSF) directs the protein to the mitochondrion. A disordered region spans residues 23 to 62 (SRTPLRSFATTSDTPQTSVPEAPGKRSRPPTSFSDTLNAG). Polar residues-rich tracts occupy residues 30–41 (FATTSDTPQTSV) and 51–61 (PPTSFSDTLNA). Positions 132, 137, 143, 163, 167, 170, and 378 each coordinate [4Fe-4S] cluster. The Radical SAM core domain occupies 146 to 367 (GSSKSAATAT…RQRALDMGFL (222 aa)).

It belongs to the radical SAM superfamily. Lipoyl synthase family. It depends on [4Fe-4S] cluster as a cofactor.

It localises to the mitochondrion. The enzyme catalyses [[Fe-S] cluster scaffold protein carrying a second [4Fe-4S](2+) cluster] + N(6)-octanoyl-L-lysyl-[protein] + 2 oxidized [2Fe-2S]-[ferredoxin] + 2 S-adenosyl-L-methionine + 4 H(+) = [[Fe-S] cluster scaffold protein] + N(6)-[(R)-dihydrolipoyl]-L-lysyl-[protein] + 4 Fe(3+) + 2 hydrogen sulfide + 2 5'-deoxyadenosine + 2 L-methionine + 2 reduced [2Fe-2S]-[ferredoxin]. The protein operates within protein modification; protein lipoylation via endogenous pathway; protein N(6)-(lipoyl)lysine from octanoyl-[acyl-carrier-protein]: step 2/2. Functionally, catalyzes the radical-mediated insertion of two sulfur atoms into the C-6 and C-8 positions of the octanoyl moiety bound to the lipoyl domains of lipoate-dependent enzymes, thereby converting the octanoylated domains into lipoylated derivatives. This Pyrenophora tritici-repentis (strain Pt-1C-BFP) (Wheat tan spot fungus) protein is Lipoyl synthase, mitochondrial.